Reading from the N-terminus, the 387-residue chain is MNIHEYQAKHILSKFGVNVPKGVVVHSLGEVDGALSQLNSKVVVVKAQIHAGGRGKAGGVVVSRTLDETKTSIKNMLGSTLITHQTSKDGQKVRKVYLEEGCNIKKEYYISAIVNRKQGQVSIIFSTEGGVDIEEVAATSPEKVIVCNINPVFGFQGFHGRNLCFDSNLSLDQTRKISDIAGKIYKAVLSTDANQIEINPLVETSSGEFIALDAKINFDDNALYRHPDIQELRDYDEEIKEEIEASKHGLSYIKMDGNIGCMVNGAGLAMATMDIIKYYGAEPANFLDVGGGASQKTVTEAFKIILADDKVNGILVNIFGGIMRCDIIANGIIAAIQEIGINVPLVVRLSGTNFELGKKLLDDSNLNIITANDLSEAAYNIVNIVRK.

Residues 9-244 (KHILSKFGVN…YDEEIKEEIE (236 aa)) enclose the ATP-grasp domain. ATP is bound by residues Lys46, 53 to 55 (GRG), Glu99, Cys102, and Glu107. Residues Asn199 and Asp213 each coordinate Mg(2+). Residues Asn264 and 321–323 (GIM) each bind substrate.

It belongs to the succinate/malate CoA ligase beta subunit family. Heterotetramer of two alpha and two beta subunits. The cofactor is Mg(2+).

It carries out the reaction succinate + ATP + CoA = succinyl-CoA + ADP + phosphate. It catalyses the reaction GTP + succinate + CoA = succinyl-CoA + GDP + phosphate. It functions in the pathway carbohydrate metabolism; tricarboxylic acid cycle; succinate from succinyl-CoA (ligase route): step 1/1. Functionally, succinyl-CoA synthetase functions in the citric acid cycle (TCA), coupling the hydrolysis of succinyl-CoA to the synthesis of either ATP or GTP and thus represents the only step of substrate-level phosphorylation in the TCA. The beta subunit provides nucleotide specificity of the enzyme and binds the substrate succinate, while the binding sites for coenzyme A and phosphate are found in the alpha subunit. This chain is Succinate--CoA ligase [ADP-forming] subunit beta, found in Ehrlichia chaffeensis (strain ATCC CRL-10679 / Arkansas).